Reading from the N-terminus, the 729-residue chain is Fatty acid oxidation complex subunit alpha (729 aa).

Residues methionine 1 to lysine 189 are enoyl-CoA hydratase/isomerase. Position 296 (aspartate 296) interacts with substrate. A 3-hydroxyacyl-CoA dehydrogenase region spans residues glutamate 311–alanine 729. NAD(+) contacts are provided by residues methionine 324, aspartate 343, valine 400–glutamate 402, lysine 407, and serine 429. Histidine 450 acts as the For 3-hydroxyacyl-CoA dehydrogenase activity in catalysis. Asparagine 453 is a binding site for NAD(+). Substrate-binding residues include asparagine 500 and tyrosine 660. Residues arginine 708–alanine 729 form a disordered region.

It in the N-terminal section; belongs to the enoyl-CoA hydratase/isomerase family. The protein in the C-terminal section; belongs to the 3-hydroxyacyl-CoA dehydrogenase family. Heterotetramer of two alpha chains (FadB) and two beta chains (FadA).

It carries out the reaction a (3S)-3-hydroxyacyl-CoA + NAD(+) = a 3-oxoacyl-CoA + NADH + H(+). The enzyme catalyses a (3S)-3-hydroxyacyl-CoA = a (2E)-enoyl-CoA + H2O. The catalysed reaction is a 4-saturated-(3S)-3-hydroxyacyl-CoA = a (3E)-enoyl-CoA + H2O. It catalyses the reaction (3S)-3-hydroxybutanoyl-CoA = (3R)-3-hydroxybutanoyl-CoA. It carries out the reaction a (3Z)-enoyl-CoA = a 4-saturated (2E)-enoyl-CoA. The enzyme catalyses a (3E)-enoyl-CoA = a 4-saturated (2E)-enoyl-CoA. Its pathway is lipid metabolism; fatty acid beta-oxidation. In terms of biological role, involved in the aerobic and anaerobic degradation of long-chain fatty acids via beta-oxidation cycle. Catalyzes the formation of 3-oxoacyl-CoA from enoyl-CoA via L-3-hydroxyacyl-CoA. It can also use D-3-hydroxyacyl-CoA and cis-3-enoyl-CoA as substrate. This chain is Fatty acid oxidation complex subunit alpha, found in Salmonella typhimurium (strain LT2 / SGSC1412 / ATCC 700720).